The sequence spans 100 residues: Large ribosomal subunit protein uL23 (100 aa).

This sequence belongs to the universal ribosomal protein uL23 family. In terms of assembly, part of the 50S ribosomal subunit. Contacts protein L29, and trigger factor when it is bound to the ribosome.

Functionally, one of the early assembly proteins it binds 23S rRNA. One of the proteins that surrounds the polypeptide exit tunnel on the outside of the ribosome. Forms the main docking site for trigger factor binding to the ribosome. This is Large ribosomal subunit protein uL23 from Parasynechococcus marenigrum (strain WH8102).